A 524-amino-acid chain; its full sequence is Serine/threonine-protein kinase PAK 2 (524 aa).

The tract at residues M1–E81 is disordered. At S2 the chain carries N-acetylserine. S2, S20, S55, and S58 each carry phosphoserine. Phosphothreonine is present on T60. The residue at position 62 (K62) is an N6-acetyllysine. S64 is subject to Phosphoserine. Residues K67–E81 show a composition bias toward basic and acidic residues. Residues K69–T112 form a GTPase-binding region. The interval K69–Q137 is autoregulatory region. A CRIB domain is found at I74–G87. At K128 the chain carries N6-acetyllysine. At T134 the chain carries Phosphothreonine. Position 139 is a phosphotyrosine (Y139). The residue at position 141 (S141) is a Phosphoserine. The tract at residues F142–D188 is disordered. Phosphothreonine is present on T143. S152 carries the phosphoserine modification. Phosphothreonine is present on residues T154, T159, and T169. Residues P155–V167 show a composition bias toward polar residues. Residues T169–A178 are compositionally biased toward acidic residues. Residue S197 is modified to Phosphoserine. A disordered region spans residues A204–T228. A Nuclear localization signal motif is present at residues P245–R251. The region spanning Y249–F499 is the Protein kinase domain. Residues I255–V263 and K278 contribute to the ATP site. The active-site Proton acceptor is R367. Residue T402 is modified to Phosphothreonine; by autocatalysis.

The protein belongs to the protein kinase superfamily. STE Ser/Thr protein kinase family. STE20 subfamily. As to quaternary structure, interacts tightly with GTP-bound but not GDP-bound CDC42/p21 and RAC1. Interacts with SH3MD4. Interacts with SCRIB. Interacts with ARHGEF7 and GIT1. PAK-2p34 interacts with ARHGAP10. Interacts with RAC1. Post-translationally, full-length PAK2 is autophosphorylated when activated by CDC42/p21. Following cleavage, both peptides, PAK-2p27 and PAK-2p34, become highly autophosphorylated. Autophosphorylation of PAK-2p27 can occur in the absence of any effectors and is dependent on phosphorylation of Thr-402, because PAK-2p27 is acting as an exogenous substrate. During apoptosis proteolytically cleaved by caspase-3 or caspase-3-like proteases to yield active PAK-2p34. In terms of processing, ubiquitinated, leading to its proteasomal degradation.

The protein localises to the cytoplasm. Its subcellular location is the nucleus. The protein resides in the perinuclear region. It localises to the membrane. It carries out the reaction L-seryl-[protein] + ATP = O-phospho-L-seryl-[protein] + ADP + H(+). The catalysed reaction is L-threonyl-[protein] + ATP = O-phospho-L-threonyl-[protein] + ADP + H(+). With respect to regulation, activated by binding small G proteins. Binding of GTP-bound CDC42 or RAC1 to the autoregulatory region releases monomers from the autoinhibited dimer, enables phosphorylation of Thr-402 and allows the kinase domain to adopt an active structure. Following caspase cleavage, autophosphorylated PAK-2p34 is constitutively active. Its function is as follows. Serine/threonine protein kinase that plays a role in a variety of different signaling pathways including cytoskeleton regulation, cell motility, cell cycle progression, apoptosis or proliferation. Acts as a downstream effector of the small GTPases CDC42 and RAC1. Activation by the binding of active CDC42 and RAC1 results in a conformational change and a subsequent autophosphorylation on several serine and/or threonine residues. Full-length PAK2 stimulates cell survival and cell growth. Phosphorylates MAPK4 and MAPK6 and activates the downstream target MAPKAPK5, a regulator of F-actin polymerization and cell migration. Phosphorylates JUN and plays an important role in EGF-induced cell proliferation. Phosphorylates many other substrates including histone H4 to promote assembly of H3.3 and H4 into nucleosomes, BAD, ribosomal protein S6, or MBP. Phosphorylates CASP7, thereby preventing its activity. Additionally, associates with ARHGEF7 and GIT1 to perform kinase-independent functions such as spindle orientation control during mitosis. On the other hand, apoptotic stimuli such as DNA damage lead to caspase-mediated cleavage of PAK2, generating PAK-2p34, an active p34 fragment that translocates to the nucleus and promotes cellular apoptosis involving the JNK signaling pathway. Caspase-activated PAK2 phosphorylates MKNK1 and reduces cellular translation. The polypeptide is Serine/threonine-protein kinase PAK 2 (Pak2) (Mus musculus (Mouse)).